The primary structure comprises 138 residues: Putative pre-16S rRNA nuclease (138 aa).

This sequence belongs to the YqgF nuclease family.

It is found in the cytoplasm. Its function is as follows. Could be a nuclease involved in processing of the 5'-end of pre-16S rRNA. The protein is Putative pre-16S rRNA nuclease of Glaesserella parasuis serovar 5 (strain SH0165) (Haemophilus parasuis).